A 763-amino-acid chain; its full sequence is Phosphoglycerol transferase I (763 aa).

4 consecutive transmembrane segments (helical) span residues 1–21 (MSELLSFALFLASVLIYAWKA), 26–46 (WWFAATLTVLGLFVVLNITLF), 77–97 (ILPGIGIVLGLTAVFGALGWI), and 108–128 (FGYSLLALLLALGSVDASPAF).

Belongs to the OpgB family.

It is found in the cell inner membrane. It carries out the reaction a phosphatidylglycerol + a membrane-derived-oligosaccharide D-glucose = a 1,2-diacyl-sn-glycerol + a membrane-derived-oligosaccharide 6-(glycerophospho)-D-glucose.. It participates in glycan metabolism; osmoregulated periplasmic glucan (OPG) biosynthesis. Functionally, transfers a phosphoglycerol residue from phosphatidylglycerol to the membrane-bound nascent glucan backbones. The sequence is that of Phosphoglycerol transferase I from Escherichia coli (strain SE11).